A 128-amino-acid polypeptide reads, in one-letter code: Aspartate 1-decarboxylase (128 aa).

Residue S25 is the Schiff-base intermediate with substrate; via pyruvic acid of the active site. The residue at position 25 (S25) is a Pyruvic acid (Ser). T57 serves as a coordination point for substrate. Residue Y58 is the Proton donor of the active site. Residue 73-75 (GSA) participates in substrate binding.

It belongs to the PanD family. In terms of assembly, heterooctamer of four alpha and four beta subunits. The cofactor is pyruvate. Post-translationally, is synthesized initially as an inactive proenzyme, which is activated by self-cleavage at a specific serine bond to produce a beta-subunit with a hydroxyl group at its C-terminus and an alpha-subunit with a pyruvoyl group at its N-terminus.

It is found in the cytoplasm. The catalysed reaction is L-aspartate + H(+) = beta-alanine + CO2. It functions in the pathway cofactor biosynthesis; (R)-pantothenate biosynthesis; beta-alanine from L-aspartate: step 1/1. Catalyzes the pyruvoyl-dependent decarboxylation of aspartate to produce beta-alanine. In Burkholderia thailandensis (strain ATCC 700388 / DSM 13276 / CCUG 48851 / CIP 106301 / E264), this protein is Aspartate 1-decarboxylase.